Here is a 941-residue protein sequence, read N- to C-terminus: PHD finger protein 14 (941 aa).

Residues 22-295 (DYDSSDDSDF…LSQSKSNEDS (274 aa)) are disordered. Phosphoserine is present on residues S26 and S29. Residues 36–47 (ASDSEGSGNGSE) show a composition bias toward low complexity. Positions 60–72 (DSEENILEEELNE) are enriched in acidic residues. 3 stretches are compositionally biased toward basic and acidic residues: residues 74 to 85 (IQVKEEQLKNST), 94 to 109 (QLIK…NGER), and 116 to 132 (KEKE…EKAT). A Phosphoserine modification is found at S84. A compositionally biased stretch (low complexity) spans 133-166 (VSDSAAASAAGTTPATSPPAVTSPSVPTTTTTTT). At S189 the chain carries Phosphoserine. Acidic residues-rich tracts occupy residues 194–205 (NAMDDYDSEDDN) and 226–249 (DGDN…EGND). Y199 bears the Phosphotyrosine mark. S201 carries the phosphoserine modification. Position 280 is a phosphothreonine (T280). Polar residues predominate over residues 281–290 (NDSLTLSQSK). Residues S283, S287, S291, S295, and S301 each carry the phosphoserine modification. The PHD-type 1 zinc finger occupies 312 to 373 (ILICCVCLGD…PWFCDACKCG (62 aa)). Positions 315, 318, 332, 335, 340, and 343 each coordinate Zn(2+). A Phosphoserine modification is found at S352. Zn(2+) is bound by residues C367, C370, C378, C381, H398, C401, C434, C437, C451, C456, H461, C464, C488, and H491. Residues 375-408 (SPSCELCPNQDGIFKETDAGRWVHIVCALYVPGV) form a C2HC pre-PHD-type zinc finger. Residues 432–492 (KECSFCEDPR…PFFAYCKQHA (61 aa)) form a PHD-type 2 zinc finger. S523 is modified (phosphoserine). Residues 623–671 (MIQIQENMAEQKNIKDKLENEQEKLHVEYNKLCESLEELQNLNGKLRSE) are a coiled coil. A PHD-type 3 zinc finger spans residues 718 to 772 (LYSCGICKKNHDQHLLLLCDTCKLHYHLGCLDPPLTRMPRKTKNSYWQCSECDQA). Residues C721, C724, C736, C739, H744, C747, C766, and C769 each coordinate Zn(2+). S774, S775, and S828 each carry phosphoserine. Residues 804–855 (VPQDVPPEPKKIPIRNTRTRGRKRSFVPEEEKHEERVPRERRQRQSVLQKKP) are disordered. The span at 829-843 (FVPEEEKHEERVPRE) shows a compositional bias: basic and acidic residues. Residues 861-914 (RTECSTCKGTGDNENLVRCDECRLCYHFGCLDPPLKKSPKQTGYGWICQECDSS) form a PHD-type 4 zinc finger. Positions 864, 867, 879, 882, 887, 890, 908, and 911 each coordinate Zn(2+). The disordered stretch occupies residues 912-941 (DSSSSKEDENEAEKKNASQELSMEQKTPKK). Residues 915–928 (SSKEDENEAEKKNA) are compositionally biased toward basic and acidic residues. Residues 930 to 941 (QELSMEQKTPKK) are compositionally biased toward polar residues.

As to expression, high levels detected in testis, lung and spleen and low levels in muscle, heart, intestine and kidney (at protein level). Widely expressed in adult with increased levels in intestine, colon and lung.

Its subcellular location is the nucleus. It is found in the chromosome. It localises to the cytoplasm. Its function is as follows. Histone-binding protein. Binds preferentially to unmodified histone H3 but can also bind to a lesser extent to histone H3 trimethylated at 'Lys-9' (H3K9me3) as well as to histone H3 monomethylated at 'Lys-27' (H3K27ac) and trimethylated at 'Lys-27' (H3K27me3). Represses PDGFRA expression, thus playing a role in regulation of mesenchymal cell proliferation. Suppresses the expression of CDKN1A/p21 by reducing the level of trimethylation of histone H3 'Lys-4', leading to enhanced proliferation of germinal center B cells. This chain is PHD finger protein 14 (Phf14), found in Mus musculus (Mouse).